The chain runs to 288 residues: Bifunctional protein FolD (288 aa).

Residues 166–168 (GAS) and Ile-232 each bind NADP(+).

It belongs to the tetrahydrofolate dehydrogenase/cyclohydrolase family. As to quaternary structure, homodimer.

It carries out the reaction (6R)-5,10-methylene-5,6,7,8-tetrahydrofolate + NADP(+) = (6R)-5,10-methenyltetrahydrofolate + NADPH. The enzyme catalyses (6R)-5,10-methenyltetrahydrofolate + H2O = (6R)-10-formyltetrahydrofolate + H(+). Its pathway is one-carbon metabolism; tetrahydrofolate interconversion. Catalyzes the oxidation of 5,10-methylenetetrahydrofolate to 5,10-methenyltetrahydrofolate and then the hydrolysis of 5,10-methenyltetrahydrofolate to 10-formyltetrahydrofolate. This chain is Bifunctional protein FolD, found in Shigella dysenteriae serotype 1 (strain Sd197).